Reading from the N-terminus, the 160-residue chain is Protein-export protein SecB (160 aa).

The protein belongs to the SecB family. In terms of assembly, homotetramer, a dimer of dimers. One homotetramer interacts with 1 SecA dimer.

The protein resides in the cytoplasm. Its function is as follows. One of the proteins required for the normal export of preproteins out of the cell cytoplasm. It is a molecular chaperone that binds to a subset of precursor proteins, maintaining them in a translocation-competent state. It also specifically binds to its receptor SecA. The chain is Protein-export protein SecB from Rhodospirillum rubrum (strain ATCC 11170 / ATH 1.1.1 / DSM 467 / LMG 4362 / NCIMB 8255 / S1).